The primary structure comprises 260 residues: Winged helix repair factor 1 (260 aa).

Winged helix domain stretches follow at residues F38–M110, S126–P185, and G186–T260.

This sequence belongs to the STK19 family. In terms of assembly, monomer in solution. Homodimer; when bound to DNA. Component of a transcription-coupled nucleotide excision repair (TC-NER) complex which assembles and interacts with the multiprotein RNA polymerase II complex when it stalls at DNA lesions.

The protein localises to the nucleus. Its function is as follows. DNA-binding protein which is required for efficient transcription-coupled nucleotide excision repair (TC-NER). Acts as part of a TC-NER complex which assembles and interacts with RNA polymerase II (RNAPII) when it stalls at DNA lesions. This chain is Winged helix repair factor 1, found in Xenopus laevis (African clawed frog).